A 356-amino-acid chain; its full sequence is DNA polymerase IV (356 aa).

Positions 4 to 185 constitute a UmuC domain; sequence IIHIDMDCYY…LALGKIPGVG (182 aa). Mg(2+) contacts are provided by aspartate 8 and aspartate 103. Glutamate 104 is a catalytic residue.

The protein belongs to the DNA polymerase type-Y family. In terms of assembly, monomer. Mg(2+) serves as cofactor.

Its subcellular location is the cytoplasm. The enzyme catalyses DNA(n) + a 2'-deoxyribonucleoside 5'-triphosphate = DNA(n+1) + diphosphate. Its function is as follows. Poorly processive, error-prone DNA polymerase involved in untargeted mutagenesis. Copies undamaged DNA at stalled replication forks, which arise in vivo from mismatched or misaligned primer ends. These misaligned primers can be extended by PolIV. Exhibits no 3'-5' exonuclease (proofreading) activity. May be involved in translesional synthesis, in conjunction with the beta clamp from PolIII. This Pseudoalteromonas atlantica (strain T6c / ATCC BAA-1087) protein is DNA polymerase IV.